A 66-amino-acid chain; its full sequence is MSENGLKEQITGKVEKTKGQVKEGIGEVTEDRKLKNEGKWDKTKGTIKEKVGKVKQKISDGLDNKE.

The segment at 1 to 22 is disordered; it reads MSENGLKEQITGKVEKTKGQVK. The segment covering 13-22 has biased composition (basic and acidic residues); that stretch reads KVEKTKGQVK.

It belongs to the UPF0337 (CsbD) family.

In Bacillus thuringiensis subsp. konkukian (strain 97-27), this protein is UPF0337 protein BT9727_0908.